We begin with the raw amino-acid sequence, 421 residues long: Putative leucine-rich repeat protein R380 (421 aa).

7 LRR repeats span residues 48–69, 70–85, 89–110, 111–129, 130–150, 151–172, and 173–191; these read YLEKLFINNNNLKQLPDPQYLP, KIKELVCSYNILTHIP, NLIKLDISHNQVQNINVYNQSK, LLYLDCSFNKNIETRIFLP, ECRELYVNDANISKLEINYFP, NLRILDCSNNNISRISSLSSLI, and ELNIQNNHITELPSYPQLV.

In Acanthamoeba polyphaga (Amoeba), this protein is Putative leucine-rich repeat protein R380.